A 250-amino-acid chain; its full sequence is Ribosomal RNA small subunit methyltransferase J (250 aa).

Residues 101–102 (RD), 117–118 (ER), 153–154 (SS), and D171 each bind S-adenosyl-L-methionine.

Belongs to the methyltransferase superfamily. RsmJ family.

It localises to the cytoplasm. It catalyses the reaction guanosine(1516) in 16S rRNA + S-adenosyl-L-methionine = N(2)-methylguanosine(1516) in 16S rRNA + S-adenosyl-L-homocysteine + H(+). Specifically methylates the guanosine in position 1516 of 16S rRNA. This is Ribosomal RNA small subunit methyltransferase J from Shigella boydii serotype 18 (strain CDC 3083-94 / BS512).